A 162-amino-acid polypeptide reads, in one-letter code: Crossover junction endodeoxyribonuclease RuvC (162 aa).

Catalysis depends on residues D8, E69, and H141. Residues D8, E69, and H141 each contribute to the Mg(2+) site.

The protein belongs to the RuvC family. As to quaternary structure, homodimer which binds Holliday junction (HJ) DNA. The HJ becomes 2-fold symmetrical on binding to RuvC with unstacked arms; it has a different conformation from HJ DNA in complex with RuvA. In the full resolvosome a probable DNA-RuvA(4)-RuvB(12)-RuvC(2) complex forms which resolves the HJ. Requires Mg(2+) as cofactor.

It localises to the cytoplasm. It catalyses the reaction Endonucleolytic cleavage at a junction such as a reciprocal single-stranded crossover between two homologous DNA duplexes (Holliday junction).. In terms of biological role, the RuvA-RuvB-RuvC complex processes Holliday junction (HJ) DNA during genetic recombination and DNA repair. Endonuclease that resolves HJ intermediates. Cleaves cruciform DNA by making single-stranded nicks across the HJ at symmetrical positions within the homologous arms, yielding a 5'-phosphate and a 3'-hydroxyl group; requires a central core of homology in the junction. The consensus cleavage sequence is 5'-(A/T)TT(C/G)-3'. Cleavage occurs on the 3'-side of the TT dinucleotide at the point of strand exchange. HJ branch migration catalyzed by RuvA-RuvB allows RuvC to scan DNA until it finds its consensus sequence, where it cleaves and resolves the cruciform DNA. This Wolbachia pipientis wMel protein is Crossover junction endodeoxyribonuclease RuvC.